The chain runs to 229 residues: Large ribosomal subunit protein uL1 (229 aa).

It belongs to the universal ribosomal protein uL1 family. As to quaternary structure, part of the 50S ribosomal subunit.

Functionally, binds directly to 23S rRNA. The L1 stalk is quite mobile in the ribosome, and is involved in E site tRNA release. Its function is as follows. Protein L1 is also a translational repressor protein, it controls the translation of the L11 operon by binding to its mRNA. This chain is Large ribosomal subunit protein uL1, found in Caulobacter sp. (strain K31).